Reading from the N-terminus, the 281-residue chain is Digeranylgeranylglyceryl phosphate synthase (281 aa).

5 consecutive transmembrane segments (helical) span residues 88–108 (IALSLFGIALSIFLGFIEFLI), 132–152 (ALVSLGVAFTLIFGSLAAGNL), 200–220 (GILVFLLSLATVVLTILPVIF), 225–245 (IIYLSLSVIISLPILMLASAI), and 261–281 (LIKVSMFLGLLGMLLDPFRVV).

This sequence belongs to the UbiA prenyltransferase family. DGGGP synthase subfamily. It depends on Mg(2+) as a cofactor.

It is found in the cell membrane. It carries out the reaction sn-3-O-(geranylgeranyl)glycerol 1-phosphate + (2E,6E,10E)-geranylgeranyl diphosphate = 2,3-bis-O-(geranylgeranyl)-sn-glycerol 1-phosphate + diphosphate. It participates in membrane lipid metabolism; glycerophospholipid metabolism. Functionally, prenyltransferase that catalyzes the transfer of the geranylgeranyl moiety of geranylgeranyl diphosphate (GGPP) to the C2 hydroxyl of (S)-3-O-geranylgeranylglyceryl phosphate (GGGP). This reaction is the second ether-bond-formation step in the biosynthesis of archaeal membrane lipids. The sequence is that of Digeranylgeranylglyceryl phosphate synthase from Korarchaeum cryptofilum (strain OPF8).